The primary structure comprises 550 residues: Rhodopsin kinase grk7-b (550 aa).

Positions 22–45 (SSEGDAKELQKRRKSLSLPPPDVS) are disordered. Ser36 is subject to Phosphoserine. The RGS domain occupies 57–174 (YQSICVEQPI…QNSPFYDRFL (118 aa)). The Protein kinase domain occupies 189-451 (FYEFRILGKG…DDDPRKHAFF (263 aa)). ATP contacts are provided by residues 195-203 (LGKGGFGEV) and Lys218. Residue Asp314 is the Proton acceptor of the active site. The region spanning 452–517 (KSINFQRLEA…GAVPISWQKE (66 aa)) is the AGC-kinase C-terminal domain. Ser487 bears the Phosphoserine mark. The interval 531–550 (SREVTGGGNSGEKSGVCSIL) is disordered. A Cysteine methyl ester modification is found at Cys547. A lipid anchor (S-geranylgeranyl cysteine) is attached at Cys547. Residues 548–550 (SIL) constitute a propeptide, removed in mature form.

Belongs to the protein kinase superfamily. AGC Ser/Thr protein kinase family. GPRK subfamily. Post-translationally, autophosphorylated in vitro at Ser-487. Phosphorylation at Ser-36 is regulated by light and activated by cAMP. In terms of tissue distribution, retina, cones.

It is found in the membrane. It carries out the reaction L-threonyl-[rhodopsin] + ATP = O-phospho-L-threonyl-[rhodopsin] + ADP + H(+). It catalyses the reaction L-seryl-[rhodopsin] + ATP = O-phospho-L-seryl-[rhodopsin] + ADP + H(+). Its function is as follows. Retina-specific kinase involved in the shutoff of the photoresponse and adaptation to changing light conditions via cone opsin phosphorylation, including rhodopsin (RHO). This chain is Rhodopsin kinase grk7-b (grk7-b), found in Xenopus laevis (African clawed frog).